The primary structure comprises 178 residues: ATP synthase subunit delta (178 aa).

It belongs to the ATPase delta chain family. F-type ATPases have 2 components, F(1) - the catalytic core - and F(0) - the membrane proton channel. F(1) has five subunits: alpha(3), beta(3), gamma(1), delta(1), epsilon(1). F(0) has three main subunits: a(1), b(2) and c(10-14). The alpha and beta chains form an alternating ring which encloses part of the gamma chain. F(1) is attached to F(0) by a central stalk formed by the gamma and epsilon chains, while a peripheral stalk is formed by the delta and b chains.

It localises to the cell inner membrane. F(1)F(0) ATP synthase produces ATP from ADP in the presence of a proton or sodium gradient. F-type ATPases consist of two structural domains, F(1) containing the extramembraneous catalytic core and F(0) containing the membrane proton channel, linked together by a central stalk and a peripheral stalk. During catalysis, ATP synthesis in the catalytic domain of F(1) is coupled via a rotary mechanism of the central stalk subunits to proton translocation. Its function is as follows. This protein is part of the stalk that links CF(0) to CF(1). It either transmits conformational changes from CF(0) to CF(1) or is implicated in proton conduction. In Marinobacter nauticus (strain ATCC 700491 / DSM 11845 / VT8) (Marinobacter aquaeolei), this protein is ATP synthase subunit delta.